Here is a 925-residue protein sequence, read N- to C-terminus: Calpain-B (925 aa).

In terms of domain architecture, Calpain catalytic spans 259–558 (MFEDPDFPAT…FDRVEICNLS (300 aa)). Catalysis depends on residues C314, H470, and N498. Positions 559–728 (PDSLTEDQQH…TRNNMEENDD (170 aa)) are domain III. Residues 723–753 (MEENDDEVGFGETDDRIAPSLPPPTPKEEDD) form a disordered region. A linker region spans residues 729–748 (EVGFGETDDRIAPSLPPPTP). Residues 749–925 (KEEDDPQRIA…DDWLERTIYS (177 aa)) are domain IV. EF-hand domains are found at residues 796 to 831 (FSKDAVRSMVAMLDKDRSGRLGFEEFEALLTDIAKW) and 826 to 861 (TDIAKWRAVFKLYDTRRTGSIDGFHLRGALNSAGYH). Residues D809, D811, S813, R815, E820, D839, T843, S845, and H850 each coordinate Ca(2+).

It belongs to the peptidase C2 family. Post-translationally, undergoes calcium-dependent autolytic cleavage between Asn-74 and Ala-75 and between Gln-224 and Asn-225 to produce two major products, calpain B catalytic subunit 1 and calpain B catalytic subunit 2. This autolysis is necessary for activation of the protein. As to expression, strongly expressed in follicular and border cells of the oocyte. Ubiquitously expressed in early embryos. Localized to the trachea and their orifices, and to the larynx of late embryos. Restricted to the salivary gland in third instar larvae.

It localises to the cytoplasm. Its subcellular location is the membrane. With respect to regulation, activated by millimolar concentrations of calcium. Its function is as follows. Calcium-regulated non-lysosomal thiol-protease. This Drosophila melanogaster (Fruit fly) protein is Calpain-B.